Consider the following 545-residue polypeptide: CTP synthase (545 aa).

The segment at 1 to 266 is amidoligase domain; the sequence is MTTNYIFVTG…DDYICKRFSL (266 aa). Serine 14 is a CTP binding site. Serine 14 provides a ligand contact to UTP. Residues 15–20 and aspartate 72 each bind ATP; that span reads SLGKGI. 2 residues coordinate Mg(2+): aspartate 72 and glutamate 140. CTP contacts are provided by residues 147–149, 187–192, and lysine 223; these read DIE and KTKPTQ. UTP contacts are provided by residues 187 to 192 and lysine 223; that span reads KTKPTQ. Position 239–241 (239–241) interacts with ATP; the sequence is KDV. Positions 291–542 constitute a Glutamine amidotransferase type-1 domain; it reads TIGMVGKYIE…VKAANEHQKR (252 aa). Glycine 352 is an L-glutamine binding site. Catalysis depends on cysteine 379, which acts as the Nucleophile; for glutamine hydrolysis. Residues 380 to 383, glutamate 403, and arginine 470 contribute to the L-glutamine site; that span reads LGMQ. Catalysis depends on residues histidine 515 and glutamate 517.

The protein belongs to the CTP synthase family. As to quaternary structure, homotetramer.

The catalysed reaction is UTP + L-glutamine + ATP + H2O = CTP + L-glutamate + ADP + phosphate + 2 H(+). It catalyses the reaction L-glutamine + H2O = L-glutamate + NH4(+). It carries out the reaction UTP + NH4(+) + ATP = CTP + ADP + phosphate + 2 H(+). It participates in pyrimidine metabolism; CTP biosynthesis via de novo pathway; CTP from UDP: step 2/2. Allosterically activated by GTP, when glutamine is the substrate; GTP has no effect on the reaction when ammonia is the substrate. The allosteric effector GTP functions by stabilizing the protein conformation that binds the tetrahedral intermediate(s) formed during glutamine hydrolysis. Inhibited by the product CTP, via allosteric rather than competitive inhibition. In terms of biological role, catalyzes the ATP-dependent amination of UTP to CTP with either L-glutamine or ammonia as the source of nitrogen. Regulates intracellular CTP levels through interactions with the four ribonucleotide triphosphates. The chain is CTP synthase from Salmonella paratyphi A (strain ATCC 9150 / SARB42).